Consider the following 338-residue polypeptide: Phenylalanine--tRNA ligase alpha subunit (338 aa).

E253 contacts Mg(2+).

This sequence belongs to the class-II aminoacyl-tRNA synthetase family. Phe-tRNA synthetase alpha subunit type 1 subfamily. In terms of assembly, tetramer of two alpha and two beta subunits. The cofactor is Mg(2+).

The protein localises to the cytoplasm. It carries out the reaction tRNA(Phe) + L-phenylalanine + ATP = L-phenylalanyl-tRNA(Phe) + AMP + diphosphate + H(+). The protein is Phenylalanine--tRNA ligase alpha subunit of Geotalea uraniireducens (strain Rf4) (Geobacter uraniireducens).